Here is an 88-residue protein sequence, read N- to C-terminus: Small ribosomal subunit protein bS16c (88 aa).

The protein belongs to the bacterial ribosomal protein bS16 family.

Its subcellular location is the plastid. The protein resides in the chloroplast. This Helianthus annuus (Common sunflower) protein is Small ribosomal subunit protein bS16c.